The primary structure comprises 548 residues: Acetylcholine receptor subunit alpha-type des-2 (548 aa).

Residues 1–19 (MLIIIQSLLLATTASLCIA) form the signal peptide. Topologically, residues 21–239 (TPVPTQIRLV…LTLYLRRKPL (219 aa)) are extracellular. N-linked (GlcNAc...) asparagine glycosylation is found at N52, N96, and N224. 3 consecutive transmembrane segments (helical) span residues 240–260 (FYLV…IVGF), 274–294 (VSLG…VSDQ), and 301–321 (FIPL…LGTV). The interval 422–460 (LIHLSPTAHQPDESISPSAPPVPSSSPLPPPLTPGPADD) is disordered. Positions 439–455 (SAPPVPSSSPLPPPLTP) are enriched in pro residues. The helical transmembrane segment at 517–537 (FVIFVVAFLIITFGINFIGFI) threads the bilayer. Residues 538–548 (HWHQAGVEYGG) are Cytoplasmic-facing.

Belongs to the ligand-gated ion channel (TC 1.A.9) family. Acetylcholine receptor (TC 1.A.9.1) subfamily. The functional receptor is a heteromer of deg-3 and des-2. Interacts with ric-3; which is required for proper receptor folding.

It localises to the cell membrane. Functionally, subunit of the non-synaptic neuronal acetylcholine receptor (AChR), which may play a role in chemotaxis towards choline. After binding choline or acetylcholine, the AChR responds by an extensive change in conformation that affects all subunits and leads to opening of an ion-conducting channel across the plasma membrane. This Caenorhabditis elegans protein is Acetylcholine receptor subunit alpha-type des-2 (des-2).